The following is a 292-amino-acid chain: Ribosomal RNA small subunit methyltransferase A (292 aa).

S-adenosyl-L-methionine contacts are provided by N28, L30, G55, E77, D103, and N123.

Belongs to the class I-like SAM-binding methyltransferase superfamily. rRNA adenine N(6)-methyltransferase family. RsmA subfamily.

The protein resides in the cytoplasm. It carries out the reaction adenosine(1518)/adenosine(1519) in 16S rRNA + 4 S-adenosyl-L-methionine = N(6)-dimethyladenosine(1518)/N(6)-dimethyladenosine(1519) in 16S rRNA + 4 S-adenosyl-L-homocysteine + 4 H(+). In terms of biological role, specifically dimethylates two adjacent adenosines (A1518 and A1519) in the loop of a conserved hairpin near the 3'-end of 16S rRNA in the 30S particle. May play a critical role in biogenesis of 30S subunits. The protein is Ribosomal RNA small subunit methyltransferase A of Methylobacterium radiotolerans (strain ATCC 27329 / DSM 1819 / JCM 2831 / NBRC 15690 / NCIMB 10815 / 0-1).